Consider the following 99-residue polypeptide: Transcriptional regulator WhiB2 (99 aa).

The 4Fe-4S Wbl-type domain occupies leucine 33–arginine 90. [4Fe-4S] cluster is bound by residues cysteine 34, cysteine 57, cysteine 60, and cysteine 66.

It belongs to the WhiB family. [4Fe-4S] cluster is required as a cofactor. The Fe-S cluster can be nitrosylated by nitric oxide (NO). Post-translationally, upon Fe-S cluster removal intramolecular disulfide bonds are formed.

It localises to the cytoplasm. In terms of biological role, acts as a transcriptional regulator. Probably redox-responsive. The apo- but not holo-form probably binds DNA. This chain is Transcriptional regulator WhiB2 (whiB2), found in Bifidobacterium longum (strain NCC 2705).